A 327-amino-acid chain; its full sequence is Acetyl-coenzyme A carboxylase carboxyl transferase subunit beta (327 aa).

A CoA carboxyltransferase N-terminal domain is found at 24–293; that stretch reads LWIKCPDTGQ…LTVTTAVEAP (270 aa). The segment covering 293-311 has biased composition (low complexity); sequence PAEAAAKAEPEATTTEQPG. The disordered stretch occupies residues 293-327; sequence PAEAAAKAEPEATTTEQPGAPAPTEPPAQPAAPQA. Residues 312 to 327 are compositionally biased toward pro residues; that stretch reads APAPTEPPAQPAAPQA.

The protein belongs to the AccD/PCCB family. Acetyl-CoA carboxylase is a heterohexamer composed of biotin carboxyl carrier protein (AccB), biotin carboxylase (AccC) and two subunits each of ACCase subunit alpha (AccA) and ACCase subunit beta (AccD).

The protein localises to the cytoplasm. It catalyses the reaction N(6)-carboxybiotinyl-L-lysyl-[protein] + acetyl-CoA = N(6)-biotinyl-L-lysyl-[protein] + malonyl-CoA. Its pathway is lipid metabolism; malonyl-CoA biosynthesis; malonyl-CoA from acetyl-CoA: step 1/1. Functionally, component of the acetyl coenzyme A carboxylase (ACC) complex. Biotin carboxylase (BC) catalyzes the carboxylation of biotin on its carrier protein (BCCP) and then the CO(2) group is transferred by the transcarboxylase to acetyl-CoA to form malonyl-CoA. The protein is Acetyl-coenzyme A carboxylase carboxyl transferase subunit beta of Rhodopseudomonas palustris (strain ATCC BAA-98 / CGA009).